Here is a 352-residue protein sequence, read N- to C-terminus: UDP-N-acetylglucosamine--N-acetylmuramyl-(pentapeptide) pyrophosphoryl-undecaprenol N-acetylglucosamine transferase (352 aa).

UDP-N-acetyl-alpha-D-glucosamine-binding positions include 13 to 15 (TGG), Asn-125, Arg-161, Ser-189, Ile-242, 261 to 266 (ALTVSE), and Gln-286.

The protein belongs to the glycosyltransferase 28 family. MurG subfamily.

It localises to the cell inner membrane. The catalysed reaction is di-trans,octa-cis-undecaprenyl diphospho-N-acetyl-alpha-D-muramoyl-L-alanyl-D-glutamyl-meso-2,6-diaminopimeloyl-D-alanyl-D-alanine + UDP-N-acetyl-alpha-D-glucosamine = di-trans,octa-cis-undecaprenyl diphospho-[N-acetyl-alpha-D-glucosaminyl-(1-&gt;4)]-N-acetyl-alpha-D-muramoyl-L-alanyl-D-glutamyl-meso-2,6-diaminopimeloyl-D-alanyl-D-alanine + UDP + H(+). The protein operates within cell wall biogenesis; peptidoglycan biosynthesis. Functionally, cell wall formation. Catalyzes the transfer of a GlcNAc subunit on undecaprenyl-pyrophosphoryl-MurNAc-pentapeptide (lipid intermediate I) to form undecaprenyl-pyrophosphoryl-MurNAc-(pentapeptide)GlcNAc (lipid intermediate II). The polypeptide is UDP-N-acetylglucosamine--N-acetylmuramyl-(pentapeptide) pyrophosphoryl-undecaprenol N-acetylglucosamine transferase (Erwinia tasmaniensis (strain DSM 17950 / CFBP 7177 / CIP 109463 / NCPPB 4357 / Et1/99)).